Reading from the N-terminus, the 314-residue chain is DNA-directed RNA polymerase subunit alpha (314 aa).

Residues 1-228 (MIEFEKPKIH…EHLAIFVNLN (228 aa)) are alpha N-terminal domain (alpha-NTD). The segment at 245–314 (KEKMLEMTIE…LLGLGFRSED (70 aa)) is alpha C-terminal domain (alpha-CTD).

Belongs to the RNA polymerase alpha chain family. As to quaternary structure, homodimer. The RNAP catalytic core consists of 2 alpha, 1 beta, 1 beta' and 1 omega subunit. When a sigma factor is associated with the core the holoenzyme is formed, which can initiate transcription.

The catalysed reaction is RNA(n) + a ribonucleoside 5'-triphosphate = RNA(n+1) + diphosphate. Its function is as follows. DNA-dependent RNA polymerase catalyzes the transcription of DNA into RNA using the four ribonucleoside triphosphates as substrates. The chain is DNA-directed RNA polymerase subunit alpha from Pediococcus pentosaceus (strain ATCC 25745 / CCUG 21536 / LMG 10740 / 183-1w).